A 343-amino-acid polypeptide reads, in one-letter code: MKNLLDLSYEELVAEVTSLGLERYRADQILDWVFNKKVNNFDEMTNLSKQHRALLKEHFSIPFLKLLDKKVSRIDGTTKFLWELEDGNTIESVMLFHPDRITACISTQVGCPVKCIFCATGMSGFVRNLTTGEIVAQILSMEREEKKKIGNVVYMGMGEPLLNYENTIKSIRILNHKKMGNIGIRRITISTVGIPDRIIQLAEEGLDVKLALSLHAPTNFKRDQLVPLNKKYSIEEILNAVKIYQRKTGNRVTIEYVLIRGINDEISDAKKLAEILKNMKIFVNLIPVNPTAEDLKKPSRERLLAFKRILLENGIEAEIRREKGSDIEAACGQLRLKRIKSTS.

Glutamate 91 acts as the Proton acceptor in catalysis. One can recognise a Radical SAM core domain in the interval 97–326 (HPDRITACIS…AEIRREKGSD (230 aa)). Cysteine 104 and cysteine 331 are joined by a disulfide. 3 residues coordinate [4Fe-4S] cluster: cysteine 111, cysteine 115, and cysteine 118. Residues 158–159 (GE), serine 190, 213–215 (SLH), and asparagine 289 contribute to the S-adenosyl-L-methionine site. Catalysis depends on cysteine 331, which acts as the S-methylcysteine intermediate.

The protein belongs to the radical SAM superfamily. RlmN family. [4Fe-4S] cluster serves as cofactor.

The protein resides in the cytoplasm. It carries out the reaction adenosine(2503) in 23S rRNA + 2 reduced [2Fe-2S]-[ferredoxin] + 2 S-adenosyl-L-methionine = 2-methyladenosine(2503) in 23S rRNA + 5'-deoxyadenosine + L-methionine + 2 oxidized [2Fe-2S]-[ferredoxin] + S-adenosyl-L-homocysteine. The catalysed reaction is adenosine(37) in tRNA + 2 reduced [2Fe-2S]-[ferredoxin] + 2 S-adenosyl-L-methionine = 2-methyladenosine(37) in tRNA + 5'-deoxyadenosine + L-methionine + 2 oxidized [2Fe-2S]-[ferredoxin] + S-adenosyl-L-homocysteine. Its function is as follows. Specifically methylates position 2 of adenine 2503 in 23S rRNA and position 2 of adenine 37 in tRNAs. In Thermotoga sp. (strain RQ2), this protein is Probable dual-specificity RNA methyltransferase RlmN.